The sequence spans 236 residues: Ubiquinone biosynthesis O-methyltransferase (236 aa).

S-adenosyl-L-methionine is bound by residues arginine 39, glycine 59, aspartate 80, and methionine 124.

Belongs to the methyltransferase superfamily. UbiG/COQ3 family.

It catalyses the reaction a 3-demethylubiquinol + S-adenosyl-L-methionine = a ubiquinol + S-adenosyl-L-homocysteine + H(+). It carries out the reaction a 3-(all-trans-polyprenyl)benzene-1,2-diol + S-adenosyl-L-methionine = a 2-methoxy-6-(all-trans-polyprenyl)phenol + S-adenosyl-L-homocysteine + H(+). It participates in cofactor biosynthesis; ubiquinone biosynthesis. Its function is as follows. O-methyltransferase that catalyzes the 2 O-methylation steps in the ubiquinone biosynthetic pathway. This chain is Ubiquinone biosynthesis O-methyltransferase, found in Shewanella sp. (strain MR-4).